Here is a 94-residue protein sequence, read N- to C-terminus: Integration host factor subunit beta (94 aa).

This sequence belongs to the bacterial histone-like protein family. Heterodimer of an alpha and a beta chain.

This protein is one of the two subunits of integration host factor, a specific DNA-binding protein that functions in genetic recombination as well as in transcriptional and translational control. This is Integration host factor subunit beta from Chelativorans sp. (strain BNC1).